The following is a 414-amino-acid chain: Isocitrate dehydrogenase [NADP] cytoplasmic (414 aa).

Serine 2 bears the N-acetylserine mark. At tyrosine 42 the chain carries Phosphotyrosine. Threonine 75 to threonine 77 serves as a coordination point for NADP(+). Threonine 77 lines the substrate pocket. Lysine 81 is modified (N6-acetyllysine). Arginine 82 provides a ligand contact to NADP(+). Residues serine 94–arginine 100 and arginine 109 contribute to the substrate site. Position 126 is an N6-succinyllysine (lysine 126). Residues arginine 132 and lysine 212 each coordinate substrate. Lysine 224, lysine 233, and lysine 243 each carry N6-acetyllysine. Residue aspartate 252 participates in Mn(2+) binding. Lysine 260 is a binding site for NADP(+). Mn(2+) is bound by residues aspartate 275 and aspartate 279. Residue glycine 310 to histidine 315 participates in NADP(+) binding. N6-acetyllysine is present on lysine 321. Asparagine 328 is an NADP(+) binding site. Serine 389 carries the post-translational modification Phosphoserine. At lysine 400 the chain carries N6-succinyllysine.

The protein belongs to the isocitrate and isopropylmalate dehydrogenases family. As to quaternary structure, homodimer. Requires Mg(2+) as cofactor. The cofactor is Mn(2+). In terms of processing, acetylation at Lys-374 dramatically reduces catalytic activity.

It localises to the cytoplasm. The protein resides in the cytosol. It carries out the reaction D-threo-isocitrate + NADP(+) = 2-oxoglutarate + CO2 + NADPH. Catalyzes the NADP(+)-dependent oxidative decarboxylation of isocitrate (D-threo-isocitrate) to 2-ketoglutarate (2-oxoglutarate), which is required by other enzymes such as the phytanoyl-CoA dioxygenase. Plays a critical role in the generation of NADPH, an important cofactor in many biosynthesis pathways. May act as a corneal epithelial crystallin and may be involved in maintaining corneal epithelial transparency. The polypeptide is Isocitrate dehydrogenase [NADP] cytoplasmic (IDH1) (Microtus mexicanus (Mexican vole)).